Reading from the N-terminus, the 177-residue chain is Olfactory protein (177 aa).

The first 17 residues, 1-17, serve as a signal peptide directing secretion; it reads MIRIIAIVVLFFLQCQA. A disulfide bridge connects residues Cys81 and Cys174.

Belongs to the calycin superfamily. Lipocalin family. In terms of tissue distribution, synthesized in Bowman glands, which secrete the mucus that bathes the cilia of the olfactory neuroepithelium.

The protein resides in the secreted. The chain is Olfactory protein from Lithobates pipiens (Northern leopard frog).